Reading from the N-terminus, the 153-residue chain is MKTFVLHIFIFALVAFASASRDSAKKIGSQYDNYETCLTEHGLTEDDVFSIGEVSSGQHKTNHEDTELHKNGCVMQCLLEKDGLMSGADYDEEKMREDYIKETGAQPGDQRIEALNACMQETKDMEDKCDKSLVLVACVLAAEAILADSSEAA.

The N-terminal stretch at 1 to 19 is a signal peptide; that stretch reads MKTFVLHIFIFALVAFASA. 3 cysteine pairs are disulfide-bonded: C37–C77, C73–C129, and C118–C138.

This sequence belongs to the PBP/GOBP family. In terms of assembly, homodimer.

It is found in the secreted. Colony queen number, a major feature of social organization, is associated with worker genotype for Gp-9. Colonies are headed by either a single reproductive queen (monogyne form) or multiple queens (polygyne form). Differences in worker Gp-9 genotypes between social forms may cause differences in workers' abilities to recognize queens and regulate their numbers. This Solenopsis daguerrei (Workerless parasitic ant) protein is Pheromone-binding protein Gp-9.